Consider the following 481-residue polypeptide: ATP synthase subunit alpha (481 aa).

Position 145-152 (145-152 (GDRQTGKT)) interacts with ATP.

It belongs to the ATPase alpha/beta chains family. In terms of assembly, F-type ATPases have 2 components, CF(1) - the catalytic core - and CF(0) - the membrane proton channel. CF(1) has five subunits: alpha(3), beta(3), gamma(1), delta(1), epsilon(1). CF(0) has three main subunits: a(1), b(2) and c(9-12). The alpha and beta chains form an alternating ring which encloses part of the gamma chain. CF(1) is attached to CF(0) by a central stalk formed by the gamma and epsilon chains, while a peripheral stalk is formed by the delta and b chains.

Its subcellular location is the cell membrane. It carries out the reaction ATP + H2O + 4 H(+)(in) = ADP + phosphate + 5 H(+)(out). Its function is as follows. Produces ATP from ADP in the presence of a proton gradient across the membrane. The alpha chain is a regulatory subunit. The polypeptide is ATP synthase subunit alpha (Carsonella ruddii (strain PV)).